Here is a 223-residue protein sequence, read N- to C-terminus: UPF0502 protein Sbal223_2520 (223 aa).

The protein belongs to the UPF0502 family.

The protein is UPF0502 protein Sbal223_2520 of Shewanella baltica (strain OS223).